The chain runs to 520 residues: Probable DNA ligase (520 aa).

E213 contributes to the ATP binding site. K215 (N6-AMP-lysine intermediate) is an active-site residue. ATP contacts are provided by R220, R235, E264, F300, R372, and K378.

This sequence belongs to the ATP-dependent DNA ligase family. The cofactor is Mg(2+).

The enzyme catalyses ATP + (deoxyribonucleotide)n-3'-hydroxyl + 5'-phospho-(deoxyribonucleotide)m = (deoxyribonucleotide)n+m + AMP + diphosphate.. Its function is as follows. DNA ligase that seals nicks in double-stranded DNA during DNA replication, DNA recombination and DNA repair. This chain is Probable DNA ligase, found in Mycobacterium sp. (strain JLS).